The following is a 659-amino-acid chain: MGEDVRRIASQSRPRPSTWAVSRPRPASWRNSRGARPESWRVSRQSFREWIEHWEFEHENRDQILELGHELEHVPDLTVDVTPPATSDGPADSIEKSKEDGDADDKRQSASDSTVKGKAKAVDIGKQQTRDAPYSVHSVGRRRLIVLAASLAGFFSPLSASIYYPALPVIAHNFHVSNSQINLTVTTYLIIQGIAPMITAGFSDTAGRRPAYAICFIVYLAANLGLALQNDYAALMVLRCLQSAGSSGAIALANGVVSDIVTPQERGSFIAFASLGSILGPTLSPVIGGLITQYLDWHWIFWFLLIFTGTFCVPFFLFFPETCRKVVGDGSIVPPPINRSLTDYLRKRKRVKSGTEANQPATKRQKMVIPNPLSTLQVFAVKQTAMILIPSGIAFGTFYAVLTGASNTFKVIYGFNQLKVSLMYIPLGVGGIASALSTGKLVDRNFRRHAEKLGITVTRNKRQDLSDFPLERARLEVGLPLFYLGTACLVIYGWILEKQYSVWGPIILMLVMSWTLAAFFQVMNVLLVDTYPGRGATVTAAVNLVRCELGAAAAAVISPMTDGVGEGWAYTIVAMIGFATTPLLLFTAVNGIRWRREAAEKEKIKKAGREAKIEAEKRAREEIETKKEAKQKAEEDVEIGDLEKQDRKDSQRPTSSKAT.

Disordered regions lie at residues 1-42 and 76-127; these read MGED…SWRV and DLTV…IGKQ. Over residues 93-109 the composition is skewed to basic and acidic residues; that stretch reads SIEKSKEDGDADDKRQS. Residues 144–164 traverse the membrane as a helical segment; that stretch reads LIVLAASLAGFFSPLSASIYY. A glycan (N-linked (GlcNAc...) asparagine) is linked at Asn182. 5 helical membrane-spanning segments follow: residues 183–203, 210–230, 235–257, 269–289, and 299–319; these read LTVTTYLIIQGIAPMITAGFS, PAYAICFIVYLAANLGLALQN, LMVLRCLQSAGSSGAIALANGVV, FIAFASLGSILGPTLSPVIGG, and WIFWFLLIFTGTFCVPFFLFF. The N-linked (GlcNAc...) asparagine glycan is linked to Asn338. 6 consecutive transmembrane segments (helical) span residues 385-405, 422-442, 475-495, 502-522, 549-569, and 572-592; these read AMILIPSGIAFGTFYAVLTGA, LMYIPLGVGGIASALSTGKLV, LEVGLPLFYLGTACLVIYGWI, VWGPIILMLVMSWTLAAFFQV, LGAAAAAVISPMTDGVGEGWA, and IVAMIGFATTPLLLFTAVNGI. Composition is skewed to basic and acidic residues over residues 605–634 and 641–651; these read KKAGREAKIEAEKRAREEIETKKEAKQKAE and DLEKQDRKDSQ. The tract at residues 605–659 is disordered; the sequence is KKAGREAKIEAEKRAREEIETKKEAKQKAEEDVEIGDLEKQDRKDSQRPTSSKAT.

Belongs to the major facilitator superfamily.

The protein resides in the membrane. Its function is as follows. MFS-type transporter; part of the gene cluster that mediates the biosynthesis of the antihypercholesterolemic agents phomoidrides which are dimeric anhydrides. The sequence is that of MFS-type transporter phiD from Fungal sp. (strain ATCC 74256).